The chain runs to 265 residues: Tryptophan synthase alpha chain (265 aa).

Active-site proton acceptor residues include E41 and D52.

It belongs to the TrpA family. In terms of assembly, tetramer of two alpha and two beta chains.

It catalyses the reaction (1S,2R)-1-C-(indol-3-yl)glycerol 3-phosphate + L-serine = D-glyceraldehyde 3-phosphate + L-tryptophan + H2O. It functions in the pathway amino-acid biosynthesis; L-tryptophan biosynthesis; L-tryptophan from chorismate: step 5/5. In terms of biological role, the alpha subunit is responsible for the aldol cleavage of indoleglycerol phosphate to indole and glyceraldehyde 3-phosphate. In Bacillus velezensis (strain DSM 23117 / BGSC 10A6 / LMG 26770 / FZB42) (Bacillus amyloliquefaciens subsp. plantarum), this protein is Tryptophan synthase alpha chain.